Reading from the N-terminus, the 208-residue chain is Small ribosomal subunit protein uS4 (208 aa).

Positions 99-165 (RRLDNVVFQL…PRLKEILSSL (67 aa)) constitute an S4 RNA-binding domain.

The protein belongs to the universal ribosomal protein uS4 family. Part of the 30S ribosomal subunit. Contacts protein S5. The interaction surface between S4 and S5 is involved in control of translational fidelity.

Its function is as follows. One of the primary rRNA binding proteins, it binds directly to 16S rRNA where it nucleates assembly of the body of the 30S subunit. With S5 and S12 plays an important role in translational accuracy. The sequence is that of Small ribosomal subunit protein uS4 from Desulfitobacterium hafniense (strain DSM 10664 / DCB-2).